A 395-amino-acid polypeptide reads, in one-letter code: Acid ceramidase (395 aa).

The signal sequence occupies residues 1 to 21 (MPGRSCVALVLLAAAVSCAVA). Cys-31 and Cys-340 are joined by a disulfide. Residue Cys-143 is the Nucleophile of the active site. Asn-173, Asn-195, Asn-259, Asn-286, Asn-342, and Asn-348 each carry an N-linked (GlcNAc...) asparagine glycan. A disulfide bond links Cys-388 and Cys-392.

This sequence belongs to the acid ceramidase family. As to quaternary structure, heterodimer; disulfide-linked. The heterodimer is composed of the disulfide-linked alpha and beta chains produced by autocatalytic cleavage of the precursor. Isoform 2: May interact with NR5A1 in the nucleus; the direct interaction would negatively regulate NR5A1 transcriptional activity. In terms of processing, N-glycosylated. Post-translationally, proteolytically cleaved into two chains alpha and beta that remain associated via a disulfide bond. Cleavage gives rise to a conformation change that activates the enzyme. The same catalytic Cys residue mediates the autoproteolytic cleavage and subsequent hydrolysis of lipid substrates. The beta chain may undergo an additional C-terminal processing. In terms of tissue distribution, broadly expressed with higher expression in heart.

The protein localises to the lysosome. The protein resides in the secreted. It localises to the nucleus. It is found in the cytoplasm. The enzyme catalyses an N-acylsphing-4-enine + H2O = sphing-4-enine + a fatty acid. It carries out the reaction a beta-D-glucosyl-(1&lt;-&gt;1')-N-acylsphing-4-enine + H2O = beta-D-glucosyl-(1&lt;-&gt;1)-sphing-4-enine + a fatty acid. The catalysed reaction is a globoside Gb3Cer + H2O = a lysoGb3 + a fatty acid. It catalyses the reaction a globoside Gb3Cer (d18:1(4E)) + H2O = a lysoGb3(d18:1(4E)) + a fatty acid. The enzyme catalyses N-dodecanoylsphing-4-enine + H2O = dodecanoate + sphing-4-enine. It carries out the reaction N-tetradecanoylsphing-4-enine + H2O = tetradecanoate + sphing-4-enine. The catalysed reaction is N-hexadecanoylsphing-4-enine + H2O = sphing-4-enine + hexadecanoate. It catalyses the reaction N-octadecanoylsphing-4-enine + H2O = sphing-4-enine + octadecanoate. The enzyme catalyses N-dodecanoyl-(4R)-hydroxysphinganine + H2O = (4R)-hydroxysphinganine + dodecanoate. It carries out the reaction N-(dodecanoyl)-sphinganine + H2O = dodecanoate + sphinganine. The catalysed reaction is N-(acetyl)-sphing-4-enine + H2O = sphing-4-enine + acetate. It catalyses the reaction N-(hexanoyl)sphing-4-enine + H2O = hexanoate + sphing-4-enine. The enzyme catalyses N-octanoylsphing-4-enine + H2O = octanoate + sphing-4-enine. It carries out the reaction N-(9Z-octadecenoyl)-sphing-4-enine + H2O = sphing-4-enine + (9Z)-octadecenoate. The catalysed reaction is N-dodecanoylethanolamine + H2O = dodecanoate + ethanolamine. Its pathway is lipid metabolism; sphingolipid metabolism. Activated by Ca(2+), Mg(2+) and Na(+) cations. Inhibited by Zn(2+). Phosphatidylserine and phosphatidic acid stimulate while cardiolipin, phosphatidylcholine, lysophosphatidylcholine, phosphatidylethanolamine, phosphatidylinositol and sphingomyelin inhibit the reverse ceramide synthase activity. Phosphatidic acid, phosphatidylinositol and C16-ceramide inhibit the ceramidase/hydrolase activity. Its function is as follows. Lysosomal ceramidase that hydrolyzes sphingolipid ceramides into sphingosine and free fatty acids at acidic pH. Ceramides, sphingosine, and its phosphorylated form sphingosine-1-phosphate are bioactive lipids that mediate cellular signaling pathways regulating several biological processes including cell proliferation, apoptosis and differentiation. Has a higher catalytic efficiency towards C12-ceramides versus other ceramides. Also catalyzes the reverse reaction allowing the synthesis of ceramides from fatty acids and sphingosine. For the reverse synthetic reaction, the natural sphingosine D-erythro isomer is more efficiently utilized as a substrate compared to D-erythro-dihydrosphingosine and D-erythro-phytosphingosine, while the fatty acids with chain lengths of 12 or 14 carbons are the most efficiently used. Also has an N-acylethanolamine hydrolase activity. By regulating the levels of ceramides, sphingosine and sphingosine-1-phosphate in the epidermis, mediates the calcium-induced differentiation of epidermal keratinocytes. Also indirectly regulates tumor necrosis factor/TNF-induced apoptosis. By regulating the intracellular balance between ceramides and sphingosine, in adrenocortical cells, probably also acts as a regulator of steroidogenesis. Functionally, may directly regulate steroidogenesis by binding the nuclear receptor NR5A1 and negatively regulating its transcriptional activity. This is Acid ceramidase from Homo sapiens (Human).